A 295-amino-acid polypeptide reads, in one-letter code: Lipase 2 (295 aa).

Residues 1–31 form the signal peptide; sequence MPKPALRRVMTATVAAVGTLALGLTDATAHA. Serine 48 acts as the Nucleophile in catalysis. 3 disulfides stabilise this stretch: cysteine 65–cysteine 89, cysteine 138–cysteine 152, and cysteine 205–cysteine 254. The active site involves histidine 275.

It belongs to the 'GDSL' lipolytic enzyme family. As to quaternary structure, monomer.

Its subcellular location is the secreted. The catalysed reaction is a triacylglycerol + H2O = a diacylglycerol + a fatty acid + H(+). Its activity is regulated as follows. Strongly inhibited by Ag(+). The cations Ca(2+) and Mg(2+) do not significantly reduce the lipolytic activity of SCO7513, whereas high concentrations of Co(2+) and Cu(2+) partially inhibit it. Is not inhibited by DTT in vitro. Is resistant to PMSF inhibition, except in the presence of Ca(2+). In terms of biological role, catalyzes the hydrolysis of fatty acid esters with a preference for long chain fatty acids (C16-C18). The chain is Lipase 2 from Streptomyces coelicolor (strain ATCC BAA-471 / A3(2) / M145).